A 206-amino-acid chain; its full sequence is MDLTVKTLEGKDAGKVSLSDAIFGLEPREDIIARVVRWQLAKRQQGTHKAKGRAEVSRTGAKMYKQKGTGRARHHSARAPQFRGGGKAHGPVVRSHAHDLPKKVRALGLRHALSAKLKAEEIIIVDDLVANEAKTKALAGAFASLGLTNALIIGGAEIEGNFKLAAQNIPNVDVLPVQGINVYDILRRGKLVLSKAAVEALEERFK.

The disordered stretch occupies residues 63–93; the sequence is MYKQKGTGRARHHSARAPQFRGGGKAHGPVV. Over residues 64–77 the composition is skewed to basic residues; the sequence is YKQKGTGRARHHSA.

This sequence belongs to the universal ribosomal protein uL4 family. In terms of assembly, part of the 50S ribosomal subunit.

Functionally, one of the primary rRNA binding proteins, this protein initially binds near the 5'-end of the 23S rRNA. It is important during the early stages of 50S assembly. It makes multiple contacts with different domains of the 23S rRNA in the assembled 50S subunit and ribosome. Its function is as follows. Forms part of the polypeptide exit tunnel. This Sinorhizobium medicae (strain WSM419) (Ensifer medicae) protein is Large ribosomal subunit protein uL4.